Here is a 517-residue protein sequence, read N- to C-terminus: RNA-binding region-containing protein 3 (517 aa).

A disordered region spans residues methionine 1–aspartate 26. At serine 21 the chain carries Phosphoserine. The 76-residue stretch at arginine 27–glutamate 102 folds into the RRM 1 domain. Disordered stretches follow at residues valine 106–glutamate 130 and methionine 213–arginine 254. Serine 108 is modified (phosphoserine). Positions serine 115–glutamate 130 are enriched in basic and acidic residues. The span at alanine 217 to proline 230 shows a compositional bias: pro residues. Over residues proline 231–glutamate 252 the composition is skewed to acidic residues. Residues cysteine 420–serine 503 form the RRM 2 domain.

Component of the U11/U12 snRNPs that are part of the U12-type spliceosome. Found in a complex with m(7)G-capped U12 snRNA. Interacts with PDCD7.

The protein localises to the nucleus. Functionally, participates in pre-mRNA U12-dependent splicing, performed by the minor spliceosome which removes U12-type introns. U12-type introns comprises less than 1% of all non-coding sequences. Binds to the 3'-stem-loop of m(7)G-capped U12 snRNA. In Pongo abelii (Sumatran orangutan), this protein is RNA-binding region-containing protein 3 (RNPC3).